A 131-amino-acid polypeptide reads, in one-letter code: Small ribosomal subunit protein uS11 (131 aa).

The protein belongs to the universal ribosomal protein uS11 family. In terms of assembly, part of the 30S ribosomal subunit. Interacts with proteins S7 and S18. Binds to IF-3.

In terms of biological role, located on the platform of the 30S subunit, it bridges several disparate RNA helices of the 16S rRNA. Forms part of the Shine-Dalgarno cleft in the 70S ribosome. This Saccharophagus degradans (strain 2-40 / ATCC 43961 / DSM 17024) protein is Small ribosomal subunit protein uS11.